The primary structure comprises 63 residues: Sperm protamine P1 (63 aa).

Residues 1–63 (MARYRRHSRS…RYSRRGRRRY (63 aa)) are disordered.

This sequence belongs to the protamine P1 family. In terms of tissue distribution, testis.

It localises to the nucleus. It is found in the chromosome. In terms of biological role, protamines substitute for histones in the chromatin of sperm during the haploid phase of spermatogenesis. They compact sperm DNA into a highly condensed, stable and inactive complex. This chain is Sperm protamine P1 (PRM1), found in Phascogale tapoatafa (Common wambenger).